The primary structure comprises 448 residues: Beta-glucosidase A (448 aa).

The active-site Proton donor is the E166. The Nucleophile role is filled by E352.

Belongs to the glycosyl hydrolase 1 family. As to quaternary structure, homooctamer.

It carries out the reaction Hydrolysis of terminal, non-reducing beta-D-glucosyl residues with release of beta-D-glucose.. BglA is intracellular and cleaves cellobiose probably through inorganic phosphate mediated hydrolysis. In Paenibacillus polymyxa (Bacillus polymyxa), this protein is Beta-glucosidase A (bglA).